A 688-amino-acid chain; its full sequence is Lap-Emerin-Man domain protein 2 (688 aa).

2 disordered regions span residues 62–113 (LQKE…IDKP) and 202–227 (PQLR…HKRP). Residues 82-92 (PKYLYPSSPSK) are compositionally biased toward low complexity. Residues 212 to 222 (RLQTSATSSPL) are compositionally biased toward polar residues. 2 helical membrane passes run 318–338 (YLVH…LALL) and 547–567 (KVFL…INFF). The residue at position 683 (T683) is a Phosphothreonine. Residue S684 is modified to Phosphoserine.

The protein resides in the nucleus inner membrane. In terms of biological role, nucleus inner membrane protein involved in meiosis. Plays a role in regulating nuclear envelope (NE) morphology and nuclear integrity, particularly during spindle pole body (SPB) extrusion or insertion through the NE, and perhaps during karyokinesis. This is Lap-Emerin-Man domain protein 2 (lem2) from Schizosaccharomyces pombe (strain 972 / ATCC 24843) (Fission yeast).